Reading from the N-terminus, the 89-residue chain is Small ribosomal subunit protein uS15 (89 aa).

It belongs to the universal ribosomal protein uS15 family. In terms of assembly, part of the 30S ribosomal subunit. Forms a bridge to the 50S subunit in the 70S ribosome, contacting the 23S rRNA.

In terms of biological role, one of the primary rRNA binding proteins, it binds directly to 16S rRNA where it helps nucleate assembly of the platform of the 30S subunit by binding and bridging several RNA helices of the 16S rRNA. Forms an intersubunit bridge (bridge B4) with the 23S rRNA of the 50S subunit in the ribosome. The chain is Small ribosomal subunit protein uS15 from Chlorobium phaeobacteroides (strain DSM 266 / SMG 266 / 2430).